Reading from the N-terminus, the 158-residue chain is Protein FAM177B (158 aa).

Residues 36 to 48 (EYSTEEEEEEEKE) show a composition bias toward acidic residues. Positions 36–59 (EYSTEEEEEEEKEEQSTNSTLDPS) are disordered.

This sequence belongs to the FAM177 family.

This Homo sapiens (Human) protein is Protein FAM177B (FAM177B).